The following is a 544-amino-acid chain: Ell-associated factor Eaf (544 aa).

The interval 147–544 (QSVPMNMGHQ…LSSNSSDDDD (398 aa)) is disordered. Residues 193–202 (SSKDKVDFKP) show a composition bias toward basic and acidic residues. Serine 205 bears the Phosphoserine mark. Low complexity predominate over residues 264-273 (SGSSTGSSSG). The span at 287–299 (GKQRQAHGKRQQI) shows a compositional bias: basic residues. 3 stretches are compositionally biased toward low complexity: residues 305 to 319 (PPVQ…QQQP), 333 to 374 (QPHP…QQRP), and 396 to 407 (ASQSVAQAAAVL). Over residues 425 to 440 (DSSDSDSGSDSDDSTE) the composition is skewed to acidic residues. 3 stretches are compositionally biased toward low complexity: residues 450–483 (EQQQ…HMNQ), 503–513 (QQPQPQPQQQQ), and 526–544 (NDLL…DDDD).

Belongs to the EAF family.

Its subcellular location is the nucleus. In terms of biological role, promotes transcriptional elongation by Su(Tpl)/ELL. Essential for development. In Drosophila persimilis (Fruit fly), this protein is Ell-associated factor Eaf.